The sequence spans 335 residues: Dolichyl-diphosphooligosaccharide--protein glycosyltransferase subunit MAGT1 (335 aa).

A signal peptide spans 1 to 29; the sequence is MASPRWLWCVCATAAVTLLLVSKVPSASA. Residues 30–184 are Extracellular-facing; it reads QRKKEKVLVE…DVNIRVIRPP (155 aa). Positions 47–175 constitute a Thioredoxin domain; that stretch reads WTNQRPVIRM…IARWIADRTD (129 aa). N-linked (GlcNAc...) asparagine glycosylation is present at Asn71. Cys87 and Cys90 are oxidised to a cystine. The helical transmembrane segment at 185–205 threads the bilayer; it reads NYAGPLMLGLLLAVIGGLVYL. At 206 to 209 the chain is on the cytoplasmic side; it reads RRSN. Residues 210–230 form a helical membrane-spanning segment; it reads MEFLFNKTGWAFAALCFVLAM. Topologically, residues 231–270 are extracellular; it reads TSGQMWNHIRGPPYAHKNPHTGHVNYIHGSSQAQFVAETH. A helical transmembrane segment spans residues 271 to 291; that stretch reads IVLLFNGGVTLGMVLLCEAAA. Residues 292 to 300 lie on the Cytoplasmic side of the membrane; sequence SDMDIGKRR. Residues 301 to 321 traverse the membrane as a helical segment; the sequence is MMCIAGIGLVVLFFSWMLSIF. The Extracellular segment spans residues 322-335; that stretch reads RSKYHGYPYSFLMS.

Belongs to the OST3/OST6 family. In terms of assembly, accessory component of the STT3B-containing form of the oligosaccharyltransferase (OST) complex. OST exists in two different complex forms which contain common core subunits RPN1, RPN2, OST48, OST4, DAD1 and TMEM258, either STT3A or STT3B as catalytic subunits, and form-specific accessory subunits. OST can form stable complexes with the Sec61 complex or with both the Sec61 and TRAP complexes. The association of TUSC3 or MAGT1 with the STT3B-containing complex seems to be mutually exclusvice.

It localises to the cell membrane. It is found in the endoplasmic reticulum. The protein resides in the endoplasmic reticulum membrane. It functions in the pathway protein modification; protein glycosylation. Its function is as follows. Accessory component of the STT3B-containing form of the N-oligosaccharyl transferase (OST) complex which catalyzes the transfer of a high mannose oligosaccharide from a lipid-linked oligosaccharide donor to an asparagine residue within an Asn-X-Ser/Thr consensus motif in nascent polypeptide chains. Involved in N-glycosylation of STT3B-dependent substrates. Specifically required for the glycosylation of a subset of acceptor sites that are near cysteine residues; in this function seems to act redundantly with TUSC3. In its oxidized form proposed to form transient mixed disulfides with a glycoprotein substrate to facilitate access of STT3B to the unmodified acceptor site. Also has oxidoreductase-independent functions in the STT3B-containing OST complex possibly involving substrate recognition. Could indirectly play a role in Mg(2+) transport in epithelial cells. The chain is Dolichyl-diphosphooligosaccharide--protein glycosyltransferase subunit MAGT1 from Rattus norvegicus (Rat).